Reading from the N-terminus, the 467-residue chain is Dihydrolipoyl dehydrogenase 3 (467 aa).

Residues 34 to 43, lysine 52, and alanine 116 each bind FAD; that span reads EGRETLGGTC. Cysteine 43 and cysteine 48 are joined by a disulfide. Residues 182–186, glutamate 205, valine 239, and 272–275 each bind NAD(+); these read GAGVI and AIGR. Residues aspartate 314 and alanine 322 each coordinate FAD. The active-site Proton acceptor is histidine 446.

It belongs to the class-I pyridine nucleotide-disulfide oxidoreductase family. Homodimer. FAD is required as a cofactor.

The protein resides in the cytoplasm. The enzyme catalyses N(6)-[(R)-dihydrolipoyl]-L-lysyl-[protein] + NAD(+) = N(6)-[(R)-lipoyl]-L-lysyl-[protein] + NADH + H(+). LPD-3 may substitute for lipoamide dehydrogenase of the 2-oxoglutarate dehydrogenase and pyruvate multienzyme complexes when the latter is inactive or missing. The polypeptide is Dihydrolipoyl dehydrogenase 3 (lpd3) (Pseudomonas aeruginosa (strain ATCC 15692 / DSM 22644 / CIP 104116 / JCM 14847 / LMG 12228 / 1C / PRS 101 / PAO1)).